Here is a 507-residue protein sequence, read N- to C-terminus: AMSH-like ubiquitin thioesterase 3 (507 aa).

Residues glutamine 73 to glutamate 107 adopt a coiled-coil conformation. Disordered regions lie at residues histidine 133–serine 162 and proline 214–aspartate 242. 3 stretches are compositionally biased toward polar residues: residues leucine 146–serine 162, proline 214–asparagine 224, and proline 232–aspartate 242. The MPN domain maps to leucine 333–valine 463. Residues histidine 411, histidine 413, aspartate 424, histidine 426, cysteine 469, histidine 475, and histidine 477 each contribute to the Zn(2+) site. Residues histidine 411–aspartate 424 carry the JAMM motif motif.

The protein belongs to the peptidase M67C family. As to quaternary structure, interacts with PATL1 and PATL2. May also bind to HSC70-1, HSC70-3, VHA-A, BGLU23 and EPSIN1. Interacts with BRO1/ALIX. It depends on Zn(2+) as a cofactor.

The protein localises to the membrane. It is found in the cytoplasm. It localises to the vacuole membrane. The protein resides in the late endosome. Zinc metalloprotease that cleaves 'Lys-48'- and 'Lys-63'-linked polyubiquitin chains, but is not implicated in protein degradation by the 26S proteasome, deneddylation, or desumoylation. Required for intracellular trafficking (e.g. trafficking from the Golgi to the vacuole and the vacuolar trafficking of endocytosed cargo), endocytosis and vacuole biogenesis. This is AMSH-like ubiquitin thioesterase 3 (AMSH3) from Arabidopsis thaliana (Mouse-ear cress).